Here is a 214-residue protein sequence, read N- to C-terminus: Superoxide dismutase [Mn] (214 aa).

Residues His-27, His-82, Asp-169, and His-173 each contribute to the Mn(2+) site.

Belongs to the iron/manganese superoxide dismutase family. Homodimer. Mn(2+) is required as a cofactor.

It catalyses the reaction 2 superoxide + 2 H(+) = H2O2 + O2. In terms of biological role, destroys superoxide anion radicals which are normally produced within the cells and which are toxic to biological systems. The sequence is that of Superoxide dismutase [Mn] (sodA) from Pasteurella multocida (strain Pm70).